A 250-amino-acid chain; its full sequence is 2,3-bisphosphoglycerate-dependent phosphoglycerate mutase (250 aa).

Substrate contacts are provided by residues 8–15, 21–22, R60, 87–90, K98, 114–115, and 183–184; these read RHGESQWN, TG, ERHY, RR, and GN. The active-site Tele-phosphohistidine intermediate is the H9. The active-site Proton donor/acceptor is E87.

It belongs to the phosphoglycerate mutase family. BPG-dependent PGAM subfamily. In terms of assembly, homodimer.

The enzyme catalyses (2R)-2-phosphoglycerate = (2R)-3-phosphoglycerate. It functions in the pathway carbohydrate degradation; glycolysis; pyruvate from D-glyceraldehyde 3-phosphate: step 3/5. In terms of biological role, catalyzes the interconversion of 2-phosphoglycerate and 3-phosphoglycerate. The sequence is that of 2,3-bisphosphoglycerate-dependent phosphoglycerate mutase from Bordetella avium (strain 197N).